We begin with the raw amino-acid sequence, 124 residues long: Large ribosomal subunit protein bL20 (124 aa).

Belongs to the bacterial ribosomal protein bL20 family.

Its function is as follows. Binds directly to 23S ribosomal RNA and is necessary for the in vitro assembly process of the 50S ribosomal subunit. It is not involved in the protein synthesizing functions of that subunit. The protein is Large ribosomal subunit protein bL20 (rplT) of Mycoplasma genitalium (strain ATCC 33530 / DSM 19775 / NCTC 10195 / G37) (Mycoplasmoides genitalium).